A 443-amino-acid polypeptide reads, in one-letter code: Arginine biosynthesis bifunctional protein ArgJ, mitochondrial (443 aa).

Substrate is bound by residues threonine 179, lysine 206, threonine 217, glutamate 303, asparagine 438, and serine 443. Threonine 217 functions as the Nucleophile in the catalytic mechanism.

It belongs to the ArgJ family. As to quaternary structure, heterodimer of an alpha and a beta chain. In terms of processing, the alpha and beta chains are autoproteolytically processed from a single precursor protein within the mitochondrion.

It localises to the mitochondrion matrix. The catalysed reaction is N(2)-acetyl-L-ornithine + L-glutamate = N-acetyl-L-glutamate + L-ornithine. It catalyses the reaction L-glutamate + acetyl-CoA = N-acetyl-L-glutamate + CoA + H(+). It participates in amino-acid biosynthesis; L-arginine biosynthesis; L-ornithine and N-acetyl-L-glutamate from L-glutamate and N(2)-acetyl-L-ornithine (cyclic): step 1/1. Its pathway is amino-acid biosynthesis; L-arginine biosynthesis; N(2)-acetyl-L-ornithine from L-glutamate: step 1/4. In terms of biological role, catalyzes two activities which are involved in the cyclic version of arginine biosynthesis: the synthesis of acetylglutamate from glutamate and acetyl-CoA, and of ornithine by transacetylation between acetylornithine and glutamate. The protein is Arginine biosynthesis bifunctional protein ArgJ, mitochondrial of Eremothecium gossypii (strain ATCC 10895 / CBS 109.51 / FGSC 9923 / NRRL Y-1056) (Yeast).